A 95-amino-acid chain; its full sequence is Small ribosomal subunit protein bS18 (95 aa).

It belongs to the bacterial ribosomal protein bS18 family. As to quaternary structure, part of the 30S ribosomal subunit. Forms a tight heterodimer with protein bS6.

Functionally, binds as a heterodimer with protein bS6 to the central domain of the 16S rRNA, where it helps stabilize the platform of the 30S subunit. This is Small ribosomal subunit protein bS18 from Ehrlichia canis (strain Jake).